Consider the following 265-residue polypeptide: MKAAVLIWLFLMGSQARHFWQQDEPPQSPWDRVKDLATVYVDSVKDSGRDYVSQFETSTLGKQLNLKLLDNWDSLTSTVNKLREQLGPVTQEFWDNLEKETEELRQEMSKDLEEVKAQVQPYLDNFQKNWQEEMNLYSQKLEPLRTELQEGALQKLQDLQEKLSPLAEQVRDRARAHVNTLRTQLAPYSDELRQRLATRLEALKENSGASLAEYHAKASEHLSALGEKAKPALDDLRQGLLPVLESFKVSFLSALEEYTKKLSSQ.

The first 16 residues, 1-16 (MKAAVLIWLFLMGSQA), serve as a signal peptide directing secretion. 2 repeat units span residues 66 to 87 (LKLL…EQLG) and 88 to 109 (PVTQ…QEMS). Residues 66-265 (LKLLDNWDSL…EEYTKKLSSQ (200 aa)) form a 10 X approximate tandem repeats region. Met-108 is subject to Methionine sulfoxide. A 3; half-length repeat occupies 110–120 (KDLEEVKAQVQ). Repeat copies occupy residues 121–142 (PYLD…QKLE), 143–164 (PLRT…EKLS), 165–186 (PLAE…TQLA), 187–208 (PYSD…ENSG), and 209–230 (ASLA…EKAK). Met-134 carries the methionine sulfoxide modification. Residues 231–241 (PALDDLRQGLL) form a 9; half-length repeat. The stretch at 242–265 (PVLESFKVSFLSALEEYTKKLSSQ) is repeat 10.

The protein belongs to the apolipoprotein A1/A4/E family. Homodimer. Interacts with APOA1BP and CLU. Component of a sperm activating protein complex (SPAP), consisting of APOA1, an immunoglobulin heavy chain, an immunoglobulin light chain and albumin. Interacts with NDRG1. Interacts with SCGB3A2. Interacts with NAXE and YJEFN3. In terms of processing, glycosylated. Post-translationally, palmitoylated. Phosphorylation sites are present in the extracellular medium.

It localises to the secreted. Participates in the reverse transport of cholesterol from tissues to the liver for excretion by promoting cholesterol efflux from tissues and by acting as a cofactor for the lecithin cholesterol acyltransferase (LCAT). As part of the SPAP complex, activates spermatozoa motility. The sequence is that of Apolipoprotein A-I (APOA1) from Aotus nancymaae (Ma's night monkey).